The sequence spans 440 residues: Ribosomal protein uS12 methylthiotransferase RimO (440 aa).

Residues 6–116 (PKVGFVSLGC…VVSAVHEVVP (111 aa)) form the MTTase N-terminal domain. Positions 15, 51, 80, 149, 153, and 156 each coordinate [4Fe-4S] cluster. Positions 135–374 (LTPRHYAYLK…AHQQAISSAR (240 aa)) constitute a Radical SAM core domain. The TRAM domain occupies 376-440 (QAKIGLEMDV…DEYDMWGELV (65 aa)).

The protein belongs to the methylthiotransferase family. RimO subfamily. It depends on [4Fe-4S] cluster as a cofactor.

It localises to the cytoplasm. It carries out the reaction L-aspartate(89)-[ribosomal protein uS12]-hydrogen + (sulfur carrier)-SH + AH2 + 2 S-adenosyl-L-methionine = 3-methylsulfanyl-L-aspartate(89)-[ribosomal protein uS12]-hydrogen + (sulfur carrier)-H + 5'-deoxyadenosine + L-methionine + A + S-adenosyl-L-homocysteine + 2 H(+). Functionally, catalyzes the methylthiolation of an aspartic acid residue of ribosomal protein uS12. The polypeptide is Ribosomal protein uS12 methylthiotransferase RimO (Ectopseudomonas mendocina (strain ymp) (Pseudomonas mendocina)).